The following is a 1049-amino-acid chain: Vacuolar membrane protease (1049 aa).

Residues methionine 1–proline 11 lie on the Cytoplasmic side of the membrane. A helical transmembrane segment spans residues methionine 12–isoleucine 32. Topologically, residues glutamine 33–threonine 438 are vacuolar. A glycan (N-linked (GlcNAc...) asparagine) is linked at asparagine 50. Positions aspartate 114–tyrosine 135 are disordered. N-linked (GlcNAc...) asparagine glycosylation is present at asparagine 157. Zn(2+) contacts are provided by histidine 221 and aspartate 233. Glutamate 267 (proton acceptor) is an active-site residue. Residues glutamate 268, glutamate 293, and histidine 365 each coordinate Zn(2+). The chain crosses the membrane as a helical span at residues leucine 439–tyrosine 459. The Cytoplasmic portion of the chain corresponds to leucine 460–tyrosine 495. A helical membrane pass occupies residues proline 496 to isoleucine 516. The Vacuolar segment spans residues asparagine 517–tyrosine 526. The chain crosses the membrane as a helical span at residues serine 527 to cysteine 547. Over asparagine 548–arginine 557 the chain is Cytoplasmic. A helical transmembrane segment spans residues glycine 558–tyrosine 578. Residues glutamate 579–serine 585 lie on the Vacuolar side of the membrane. A helical membrane pass occupies residues glycine 586–glycine 606. Residues glutamate 607–tyrosine 740 lie on the Cytoplasmic side of the membrane. Positions serine 621–serine 686 are disordered. Over residues glutamine 622–histidine 633 the composition is skewed to basic and acidic residues. Residues glycine 655 to valine 664 are compositionally biased toward acidic residues. Residues leucine 741–alanine 761 form a helical membrane-spanning segment. Topologically, residues leucine 762–leucine 773 are vacuolar. The chain crosses the membrane as a helical span at residues leucine 774–isoleucine 794. Residues histidine 795–methionine 801 lie on the Cytoplasmic side of the membrane. Residues proline 802–phenylalanine 822 form a helical membrane-spanning segment. At serine 823 to valine 1049 the chain is on the vacuolar side. A glycan (N-linked (GlcNAc...) asparagine) is linked at asparagine 914.

This sequence belongs to the peptidase M28 family. Zn(2+) is required as a cofactor.

The protein localises to the vacuole membrane. Its function is as follows. May be involved in vacuolar sorting and osmoregulation. The sequence is that of Vacuolar membrane protease from Botryotinia fuckeliana (strain B05.10) (Noble rot fungus).